We begin with the raw amino-acid sequence, 681 residues long: Probable glutamate carboxypeptidase LAMP1 (681 aa).

Residues methionine 1–serine 6 lie on the Cytoplasmic side of the membrane. A helical; Signal-anchor for type II membrane protein transmembrane segment spans residues leucine 7–serine 24. The Extracellular portion of the chain corresponds to proline 25 to isoleucine 681. Residues asparagine 42, asparagine 140, asparagine 166, and asparagine 299 are each glycosylated (N-linked (GlcNAc...) asparagine). Positions serine 241–leucine 527 are catalytic. Histidine 333 and aspartate 343 together coordinate Zn(2+). Glutamate 380 serves as the catalytic Nucleophile. 2 residues coordinate Zn(2+): glutamate 381 and aspartate 409. Asparagine 441 carries an N-linked (GlcNAc...) asparagine glycan. Histidine 493 is a binding site for Zn(2+). Asparagine 536 is a glycosylation site (N-linked (GlcNAc...) asparagine).

The protein belongs to the peptidase M28 family. M28B subfamily. Zn(2+) serves as cofactor.

It localises to the endoplasmic reticulum membrane. The catalysed reaction is Release of an unsubstituted, C-terminal glutamyl residue, typically from Ac-Asp-Glu or folylpoly-gamma-glutamates.. Functionally, acts in association with AMP1 to suppress ectopic stem cell niche formation in the shoot apical meristem (SAM) independently of cytokinin signaling pathway. This is Probable glutamate carboxypeptidase LAMP1 from Arabidopsis thaliana (Mouse-ear cress).